We begin with the raw amino-acid sequence, 134 residues long: Large ribosomal subunit protein uL22 (134 aa).

It belongs to the universal ribosomal protein uL22 family. Part of the 50S ribosomal subunit. Contacts protein L32.

In terms of biological role, this protein binds specifically to 23S rRNA; its binding is stimulated by other ribosomal proteins, e.g. L4, L17, and L20. It is important during the early stages of 50S assembly. It makes multiple contacts with different domains of the 23S rRNA in the assembled 50S subunit and ribosome. Functionally, the globular domain of the protein is located by the polypeptide exit tunnel on the outside of the subunit while an extended beta-hairpin forms part of the wall of the tunnel. Forms a pair of 'tweezers' with L32 that hold together two different domains of the 23S rRNA. Interacts with the tunnel-blocking modified macrolide azithromycin. Upon binding of the macrolide troleadomycin to the ribosome, the tip of the beta-hairpin is displaced, which severely restricts the tunnel. This and experiments in E.coli have led to the suggestion that it is part of the gating mechanism involved in translation arrest in the absence of the protein export system. The polypeptide is Large ribosomal subunit protein uL22 (rplV) (Deinococcus radiodurans (strain ATCC 13939 / DSM 20539 / JCM 16871 / CCUG 27074 / LMG 4051 / NBRC 15346 / NCIMB 9279 / VKM B-1422 / R1)).